Consider the following 226-residue polypeptide: Ribonuclease 3 (226 aa).

The RNase III domain occupies 6–128; sequence TKKIQKVLGY…LIGSIYLDSN (123 aa). Glu-41 contributes to the Mg(2+) binding site. The active site involves Asp-45. Residues Asn-114 and Glu-117 each coordinate Mg(2+). Glu-117 is a catalytic residue. In terms of domain architecture, DRBM spans 155-225; sequence DPKTRLQEYL…AQKALIKLGV (71 aa).

The protein belongs to the ribonuclease III family. In terms of assembly, homodimer. The cofactor is Mg(2+).

The protein localises to the cytoplasm. It carries out the reaction Endonucleolytic cleavage to 5'-phosphomonoester.. Digests double-stranded RNA. Involved in the processing of primary rRNA transcript to yield the immediate precursors to the large and small rRNAs (23S and 16S). Processes some mRNAs, and tRNAs when they are encoded in the rRNA operon. Processes pre-crRNA and tracrRNA of type II CRISPR loci if present in the organism. This Buchnera aphidicola subsp. Acyrthosiphon pisum (strain 5A) protein is Ribonuclease 3.